We begin with the raw amino-acid sequence, 22 residues long: uncharacterized protein (22 aa).

A helical transmembrane segment spans residues 3–22 (MFITGYDINQKQKKRYGLRG).

It belongs to the asfivirus C84L family.

The protein localises to the host membrane. This is an uncharacterized protein from Ornithodoros (relapsing fever ticks).